The sequence spans 647 residues: LIM domain kinase 1 (647 aa).

LIM zinc-binding domains are found at residues 25–75 (CASC…CKKD) and 84–137 (CHGC…CGQC). The region spanning 165–258 (LVSIPASAHG…LLQLTLEHDP (94 aa)) is the PDZ domain. Ser-210 carries the post-translational modification Phosphoserine. Position 229 is a phosphothreonine (Thr-229). Residues 256–319 (HDPHDSLGHG…SPASQRKDLG (64 aa)) are disordered. Positions 266-277 (PVSDPSPLSSPV) are enriched in low complexity. Polar residues-rich tracts occupy residues 278-289 (HTPSGQAASSAR) and 298-313 (SIDTSPGTSSLASPAS). Ser-298, Ser-302, Ser-307, and Ser-310 each carry phosphoserine. Phosphoserine; by MAPKAPK2 is present on Ser-323. Ser-337 carries the phosphoserine modification. The 266-residue stretch at 339–604 (LIHGEVLGKG…PSFVKLEQWL (266 aa)) folds into the Protein kinase domain. Residues 345–353 (LGKGCFGQA) and Lys-368 each bind ATP. Asp-460 is an active-site residue. Thr-508 is modified (phosphothreonine; by ROCK1).

Belongs to the protein kinase superfamily. TKL Ser/Thr protein kinase family. As to quaternary structure, self-associates to form homodimers. Interacts with HSP90AA1; this interaction promotes LIMK1 dimerization and subsequent transphosphorylation. Interacts with CDKN1C. Interacts (via LIM domain) with the cytoplasmic domain of NRG1. Interacts with NISCH. Interacts with SSH1. Interacts with RLIM and RNF6. Interacts (via LIM zinc-binding domains) with FAM89B/LRAP25 (via LRR repeat). Forms a tripartite complex with CDC42BPA, CDC42BPB and FAM89B/LRAP25. In terms of processing, autophosphorylated. Phosphorylated on Thr-508 by ROCK1 and PAK1, resulting in activation. Phosphorylated by PAK4 which increases the ability of LIMK1 to phosphorylate cofilin. Phosphorylated at Ser-323 by MAPKAPK2 during activation of VEGFA-induced signaling, which results in activation of LIMK1 and promotion of actin reorganization, cell migration, and tubule formation of endothelial cells. Dephosphorylated and inactivated by SSH1. Phosphorylated by CDC42BP. Post-translationally, ubiquitinated. 'Lys-48'-linked polyubiquitination by RNF6 leads to proteasomal degradation through the 26S proteasome, modulating LIMK1 levels in the growth cone and its effect on axonal outgrowth. Also polyubiquitinated by RLIM. As to expression, highest expression in the nervous system, particularly in the spinal cord and the cranial nerve and dorsal root ganglia.

The protein resides in the cytoplasm. It localises to the nucleus. It is found in the cytoskeleton. Its subcellular location is the cell projection. The protein localises to the lamellipodium. The catalysed reaction is L-seryl-[protein] + ATP = O-phospho-L-seryl-[protein] + ADP + H(+). The enzyme catalyses L-threonyl-[protein] + ATP = O-phospho-L-threonyl-[protein] + ADP + H(+). Serine/threonine-protein kinase that plays an essential role in the regulation of actin filament dynamics. Acts downstream of several Rho family GTPase signal transduction pathways. Activated by upstream kinases including ROCK1, PAK1 and PAK4, which phosphorylate LIMK1 on a threonine residue located in its activation loop. LIMK1 subsequently phosphorylates and inactivates the actin binding/depolymerizing factors cofilin-1/CFL1, cofilin-2/CFL2 and destrin/DSTN, thereby preventing the cleavage of filamentous actin (F-actin), and stabilizing the actin cytoskeleton. In this way LIMK1 regulates several actin-dependent biological processes including cell motility, cell cycle progression, and differentiation. Phosphorylates TPPP on serine residues, thereby promoting microtubule disassembly. Stimulates axonal outgrowth and may be involved in brain development. The sequence is that of LIM domain kinase 1 (Limk1) from Mus musculus (Mouse).